A 552-amino-acid chain; its full sequence is Putative phosphate permease MT2339 (552 aa).

13 helical membrane passes run 38-58 (WHLSFSLLLAGSFVLFSWWAF), 69-89 (ILVLATVVGMFMAFNVGGNDV), 107-127 (ALLVAAIFEVSGAVIAGGDVT), 146-166 (DFMNIMLSALSAAALWLLFAN), 178-198 (IIGGIVGAAIALGMVSGQGGA), 213-233 (VSWVLSPVLGGLVSYLLYGVI), 326-346 (VPLVAAAGSMIIVAMLLFKGF), 360-380 (FIIAMVGAAVWMATFIFAKTL), 389-409 (TFLMFSWMQVFTASGFAFSHG), 437-457 (AVPAAAMVTFGVALCAGLWFI), 472-492 (MHPASGFAAELSAAGVVMGAT), 493-513 (VLGLPVSSTHILIGAVLGVGI), and 526-546 (IVLAWVITLPSAAILASVGLV).

This sequence belongs to the inorganic phosphate transporter (PiT) (TC 2.A.20) family.

The protein localises to the cell membrane. Its function is as follows. Potential transporter for phosphate. The protein is Putative phosphate permease MT2339 of Mycobacterium tuberculosis (strain CDC 1551 / Oshkosh).